The sequence spans 307 residues: Methionyl-tRNA formyltransferase (307 aa).

Position 108-111 (serine 108–proline 111) interacts with (6S)-5,6,7,8-tetrahydrofolate.

It belongs to the Fmt family.

The catalysed reaction is L-methionyl-tRNA(fMet) + (6R)-10-formyltetrahydrofolate = N-formyl-L-methionyl-tRNA(fMet) + (6S)-5,6,7,8-tetrahydrofolate + H(+). Functionally, attaches a formyl group to the free amino group of methionyl-tRNA(fMet). The formyl group appears to play a dual role in the initiator identity of N-formylmethionyl-tRNA by promoting its recognition by IF2 and preventing the misappropriation of this tRNA by the elongation apparatus. The sequence is that of Methionyl-tRNA formyltransferase from Xanthomonas axonopodis pv. citri (strain 306).